Reading from the N-terminus, the 617-residue chain is Protein fem-1 homolog C (617 aa).

An N-acetylmethionine modification is found at Met1. ANK repeat units follow at residues 2–31, 40–70, 82–111, 115–144, 148–177, 181–210, and 213–242; these read DLKT…KAEV, NGAT…SIEV, EGAP…SVNN, TNST…DLEV, HGHT…DVNR, KGNT…KMEK, and YGMT…TSKT. 2 TPR repeats span residues 245 to 279 and 338 to 371; these read INAL…RYSD and SYYI…QQSN. 2 ANK repeats span residues 481 to 523 and 527 to 556; these read NNFS…DVNV and DDNS…HFDA.

This sequence belongs to the fem-1 family. As to quaternary structure, component of a Cul2-RING (CRL2) E3 ubiquitin-protein ligase complex, also named ECS (Elongin BC-CUL2/5-SOCS-box protein) complex, composed of CUL2, Elongin BC (ELOB and ELOC), RBX1 and substrate-specific adapter FEM1C. In terms of tissue distribution, widely expressed. Expressed at higher level in testis.

It participates in protein modification; protein ubiquitination. Its function is as follows. Substrate-recognition component of a Cul2-RING (CRL2) E3 ubiquitin-protein ligase complex of the DesCEND (destruction via C-end degrons) pathway, which recognizes a C-degron located at the extreme C terminus of target proteins, leading to their ubiquitination and degradation. The C-degron recognized by the DesCEND pathway is usually a motif of less than ten residues and can be present in full-length proteins, truncated proteins or proteolytically cleaved forms. The CRL2(FEM1C) complex specifically recognizes proteins with an arginine at the C-terminus: recognizes and binds proteins ending with -Lys/Arg-Xaa-Arg and -Lys/Arg-Xaa-Xaa-Arg C-degrons, such as SIL1 or OR51B2, leading to their ubiquitination and degradation. The CRL2(FEM1C) complex mediates ubiquitination and degradation of truncated MSRB1/SEPX1 selenoproteins produced by failed UGA/Sec decoding. Promotes ubiquitination and degradation of SLBP. The polypeptide is Protein fem-1 homolog C (Mus musculus (Mouse)).